The following is a 1040-amino-acid chain: Vitamin B12-dependent ribonucleotide reductase (1040 aa).

Residues S169, 213–214 (AC), G242, 420–424 (NPCSE), and 604–608 (PTGTI) each bind substrate. C214 and C433 form a disulfide bridge. The active-site Proton acceptor is the N420. C422 (cysteine radical intermediate) is an active-site residue. Catalysis depends on E424, which acts as the Proton acceptor. Disordered stretches follow at residues 909-932 (SAEGAAKTGGNGPDLTTAPAGATA) and 969-988 (GSATNGHSNGQSAGGSSDGA). Positions 969-979 (GSATNGHSNGQ) are enriched in polar residues.

The protein belongs to the ribonucleoside diphosphate reductase class-2 family. Adenosylcob(III)alamin serves as cofactor.

It carries out the reaction a 2'-deoxyribonucleoside 5'-diphosphate + [thioredoxin]-disulfide + H2O = a ribonucleoside 5'-diphosphate + [thioredoxin]-dithiol. Its function is as follows. Catalyzes the reduction of ribonucleotides to deoxyribonucleotides. May function to provide a pool of deoxyribonucleotide precursors for DNA repair during oxygen limitation and/or for immediate growth after restoration of oxygen. This is Vitamin B12-dependent ribonucleotide reductase (nrdJ) from Rhodopirellula baltica (strain DSM 10527 / NCIMB 13988 / SH1).